A 101-amino-acid polypeptide reads, in one-letter code: Small ribosomal subunit protein uS10 (101 aa).

It belongs to the universal ribosomal protein uS10 family. In terms of assembly, part of the 30S ribosomal subunit.

Its function is as follows. Involved in the binding of tRNA to the ribosomes. This Anaeromyxobacter dehalogenans (strain 2CP-C) protein is Small ribosomal subunit protein uS10.